The primary structure comprises 87 residues: Phosphoribosyl-ATP pyrophosphatase (87 aa).

This sequence belongs to the PRA-PH family.

Its subcellular location is the cytoplasm. It carries out the reaction 1-(5-phospho-beta-D-ribosyl)-ATP + H2O = 1-(5-phospho-beta-D-ribosyl)-5'-AMP + diphosphate + H(+). The protein operates within amino-acid biosynthesis; L-histidine biosynthesis; L-histidine from 5-phospho-alpha-D-ribose 1-diphosphate: step 2/9. The polypeptide is Phosphoribosyl-ATP pyrophosphatase (Thermobifida fusca (strain YX)).